Reading from the N-terminus, the 204-residue chain is FMN-dependent NADH:quinone oxidoreductase 2 (204 aa).

FMN is bound by residues serine 10 and 16 to 18; that span reads SIS.

This sequence belongs to the azoreductase type 1 family. As to quaternary structure, homodimer. The cofactor is FMN.

It carries out the reaction 2 a quinone + NADH + H(+) = 2 a 1,4-benzosemiquinone + NAD(+). It catalyses the reaction N,N-dimethyl-1,4-phenylenediamine + anthranilate + 2 NAD(+) = 2-(4-dimethylaminophenyl)diazenylbenzoate + 2 NADH + 2 H(+). In terms of biological role, quinone reductase that provides resistance to thiol-specific stress caused by electrophilic quinones. Its function is as follows. Also exhibits azoreductase activity. Catalyzes the reductive cleavage of the azo bond in aromatic azo compounds to the corresponding amines. This chain is FMN-dependent NADH:quinone oxidoreductase 2, found in Jannaschia sp. (strain CCS1).